We begin with the raw amino-acid sequence, 1301 residues long: Dentin sialophosphoprotein (1301 aa).

The N-terminal stretch at 1 to 15 is a signal peptide; the sequence is MKIITYFCIWAVAWA. 2 N-linked (GlcNAc...) asparagine glycosylation sites follow: Asn-41 and Asn-49. The interval 55-89 is disordered; it reads KESGVLVHEGDRGRQENTQDGHKGEGNGSKWAEVG. Basic and acidic residues predominate over residues 62–79; it reads HEGDRGRQENTQDGHKGE. N-linked (GlcNAc...) asparagine glycosylation is found at Asn-81, Asn-130, Asn-150, Asn-190, Asn-191, Asn-209, and Asn-222. The segment covering 146 to 165 has biased composition (polar residues); it reads AGATNRSNTNGNTDKNTQNG. Residues 146–171 form a disordered region; that stretch reads AGATNRSNTNGNTDKNTQNGDVGDAG. Residues 202-1301 form a disordered region; sequence NSCRNEGNTS…SDSNHSTSDD (1100 aa). Positions 203–221 are enriched in polar residues; the sequence is SCRNEGNTSEITPQINSKR. Over residues 251–267 the composition is skewed to acidic residues; sequence ADEDEDEGSGDDEDEEA. Phosphoserine; by CK1 is present on Ser-259. Polar residues predominate over residues 271–280; it reads KDSSNNSKGQ. Asn-275 carries N-linked (GlcNAc...) asparagine glycosylation. 2 stretches are compositionally biased toward basic and acidic residues: residues 281–293 and 300–327; these read EGQD…DHDS and DSKE…KSEE. Ser-301 carries the post-translational modification Phosphoserine. Asn-336 carries N-linked (GlcNAc...) asparagine glycosylation. The segment covering 340–377 has biased composition (basic and acidic residues); sequence RIEDTQKLNHRESKRVENRITKESETHAVGKSQDKGIE. A glycan (N-linked (GlcNAc...) asparagine) is linked at Asn-387. The span at 388-404 shows a compositional bias: basic and acidic residues; the sequence is ITKEVGKGNEGKEDKGQ. Low complexity-rich tracts occupy residues 439–452 and 462–487; these read SNTG…GYDS and GDDP…NSSS. The Cell attachment site motif lies at 488–490; that stretch reads RGD. Polar residues predominate over residues 488–506; sequence RGDASYNSDESKDNGNGSD. Residues 518 to 534 are compositionally biased toward low complexity; it reads TSDTNNSDSNGNGNNGN. Residues 536 to 549 are compositionally biased toward basic and acidic residues; sequence DNDKSDSGKGKSDS. Over residues 555-564 the composition is skewed to low complexity; it reads SDSSNSSDSS. Residues 581-595 show a composition bias toward acidic residues; sequence DSSDSDSSDSSDSDS. A compositionally biased stretch (low complexity) spans 596-619; that stretch reads SDSSNSSDSSDSSDSSDSSDSSDS. Over residues 620 to 642 the composition is skewed to basic and acidic residues; that stretch reads SDSKSDSSKSESDSSDSDSKSDS. Low complexity-rich tracts occupy residues 643 to 705, 715 to 1264, 1272 to 1284, and 1292 to 1301; these read SDSN…SDSS, SSDS…STSD, QSKS…NGSD, and SDSNHSTSDD.

As to quaternary structure, interacts with FBLN7. Post-translationally, DSP is glycosylated. In terms of tissue distribution, expressed in teeth. DPP is synthesized by odontoblast and transiently expressed by pre-ameloblasts.

The protein resides in the secreted. Its subcellular location is the extracellular space. It localises to the extracellular matrix. In terms of biological role, DSP may be an important factor in dentinogenesis. DPP may bind high amount of calcium and facilitate initial mineralization of dentin matrix collagen as well as regulate the size and shape of the crystals. The sequence is that of Dentin sialophosphoprotein (DSPP) from Homo sapiens (Human).